Consider the following 341-residue polypeptide: Putative ubiquitin-like-specific protease 1B (341 aa).

Catalysis depends on residues histidine 231, aspartate 248, and cysteine 300.

This sequence belongs to the peptidase C48 family.

Protease that catalyzes two essential functions in the SUMO pathway: processing of full-length SUMOs to their mature forms and deconjugation of SUMO from targeted proteins. This is Putative ubiquitin-like-specific protease 1B (ULP1B) from Arabidopsis thaliana (Mouse-ear cress).